Consider the following 378-residue polypeptide: Ribosomal RNA large subunit methyltransferase G (378 aa).

Belongs to the methyltransferase superfamily. RlmG family.

Its subcellular location is the cytoplasm. The enzyme catalyses guanosine(1835) in 23S rRNA + S-adenosyl-L-methionine = N(2)-methylguanosine(1835) in 23S rRNA + S-adenosyl-L-homocysteine + H(+). In terms of biological role, specifically methylates the guanine in position 1835 (m2G1835) of 23S rRNA. This chain is Ribosomal RNA large subunit methyltransferase G, found in Salmonella agona (strain SL483).